The primary structure comprises 310 residues: Ribose-phosphate pyrophosphokinase (310 aa).

Residues aspartate 34–glutamate 36 and arginine 93–glutamine 94 each bind ATP. Mg(2+)-binding residues include histidine 127 and aspartate 167. Lysine 190 is an active-site residue. D-ribose 5-phosphate contacts are provided by residues arginine 192, aspartate 216, and aspartate 220 to threonine 224.

Belongs to the ribose-phosphate pyrophosphokinase family. Class I subfamily. Homohexamer. It depends on Mg(2+) as a cofactor.

It localises to the cytoplasm. It catalyses the reaction D-ribose 5-phosphate + ATP = 5-phospho-alpha-D-ribose 1-diphosphate + AMP + H(+). It functions in the pathway metabolic intermediate biosynthesis; 5-phospho-alpha-D-ribose 1-diphosphate biosynthesis; 5-phospho-alpha-D-ribose 1-diphosphate from D-ribose 5-phosphate (route I): step 1/1. Functionally, involved in the biosynthesis of the central metabolite phospho-alpha-D-ribosyl-1-pyrophosphate (PRPP) via the transfer of pyrophosphoryl group from ATP to 1-hydroxyl of ribose-5-phosphate (Rib-5-P). The polypeptide is Ribose-phosphate pyrophosphokinase (Maricaulis maris (strain MCS10) (Caulobacter maris)).